A 326-amino-acid polypeptide reads, in one-letter code: Malate dehydrogenase (326 aa).

Residue G11–G17 participates in NAD(+) binding. Substrate contacts are provided by R92 and R98. Residues N105, Q112, and V129–N131 contribute to the NAD(+) site. Substrate-binding residues include N131 and R162. Residue H187 is the Proton acceptor of the active site.

This sequence belongs to the LDH/MDH superfamily. MDH type 2 family.

The enzyme catalyses (S)-malate + NAD(+) = oxaloacetate + NADH + H(+). In terms of biological role, catalyzes the reversible oxidation of malate to oxaloacetate. The chain is Malate dehydrogenase from Leptospira borgpetersenii serovar Hardjo-bovis (strain JB197).